The sequence spans 302 residues: Proline dehydrogenase 1 (302 aa).

Position 95 (K95) interacts with substrate. The active site involves D129. Residues M130 and Q158 each contribute to the FAD site. R179 is a catalytic residue. Residues 182-184 (KGA) and 221-222 (TH) contribute to the FAD site. Residue 283-284 (RR) coordinates substrate.

This sequence belongs to the proline oxidase family. Requires FAD as cofactor.

It carries out the reaction L-proline + a quinone = (S)-1-pyrroline-5-carboxylate + a quinol + H(+). It participates in amino-acid degradation; L-proline degradation into L-glutamate; L-glutamate from L-proline: step 1/2. Functionally, converts proline to delta-1-pyrroline-5-carboxylate. This chain is Proline dehydrogenase 1 (fadM), found in Bacillus subtilis subsp. natto.